The primary structure comprises 406 residues: telomere-associated protein 1 (406 aa).

A compositionally biased stretch (basic and acidic residues) spans 20–40; it reads EHHNGSHDNDDKDKEDKEKQN. A disordered region spans residues 20-46; the sequence is EHHNGSHDNDDKDKEDKEKQNTEAVAA. The 60-residue stretch at 147 to 206 folds into the HTH myb-type domain; sequence TTRRVRLRWTQEETADLMEGCKVHGVGNWKKILTDPRFRFNNRTAVDLKDRFRTCFPEDY. The segment at residues 175–202 is a DNA-binding region (H-T-H motif); that stretch reads WKKILTDPRFRFNNRTAVDLKDRFRTCF. Residues 234–288 form the Myb-like domain; the sequence is VNRKERRVFTPEEDERLLNGFMKHGPSWSNIQRDNELGLFERRSTDLRDRFRNAF. Positions 368 to 389 are disordered; that stretch reads TQELQPQAHSRKQQGGDGLKEE.

Its subcellular location is the nucleus. The protein resides in the chromosome. It is found in the telomere. Its function is as follows. Telomere-binding protein that mediates telomere clustering by promoting formation of head-to-head dimers of DNA molecules through the telomeric tracts. Binds specifically 5'-TTAGTCAGGG-3' repeats in subtelomeric regions. The chain is telomere-associated protein 1 from Yarrowia lipolytica (strain CLIB 122 / E 150) (Yeast).